The following is a 696-amino-acid chain: D-(-)-3-hydroxybutyrate oligomer hydrolase (696 aa).

Residues 1 to 20 form the signal peptide; it reads MTRLGWGRRMVFGAALAAVA. S309 functions as the Charge relay system in the catalytic mechanism.

It belongs to the D-(-)-3-hydroxybutyrate oligomer hydrolase family.

It is found in the secreted. It catalyses the reaction (3R)-hydroxybutanoate dimer + H2O = 2 (R)-3-hydroxybutanoate + H(+). It functions in the pathway lipid metabolism; butanoate metabolism. Functionally, participates in the degradation of poly-3-hydroxybutyrate (PHB). It works downstream of poly(3-hydroxybutyrate) depolymerase, hydrolyzing D(-)-3-hydroxybutyrate oligomers of various length (3HB-oligomers) into 3HB-monomers. This Burkholderia lata (strain ATCC 17760 / DSM 23089 / LMG 22485 / NCIMB 9086 / R18194 / 383) protein is D-(-)-3-hydroxybutyrate oligomer hydrolase.